We begin with the raw amino-acid sequence, 61 residues long: MTDLKITLIRSAAHRLPEQRKIVKALGLGRVDSTVVLPDNAATRGALLKIAHLISVEEINK.

This sequence belongs to the universal ribosomal protein uL30 family. In terms of assembly, part of the 50S ribosomal subunit.

The sequence is that of Large ribosomal subunit protein uL30 from Lactobacillus acidophilus (strain ATCC 700396 / NCK56 / N2 / NCFM).